Consider the following 257-residue polypeptide: Type I iodothyronine deiodinase (257 aa).

The Extracellular portion of the chain corresponds to 1 to 12; it reads MGLPGLGLLLKR. Residues 13–33 traverse the membrane as a helical; Signal-anchor for type III membrane protein segment; the sequence is FGVLVRVALKVAVGKVLLTLW. Residues 34–257 lie on the Cytoplasmic side of the membrane; sequence PSAIRPHLLA…CRSSAQSPRL (224 aa). Residue U126 is part of the active site. U126 is a non-standard amino acid (selenocysteine).

This sequence belongs to the iodothyronine deiodinase family. Predominantly monomer. Can form homodimers but homodimerization is not essential for enzyme activity. In terms of tissue distribution, liver specific.

Its subcellular location is the cell membrane. The protein resides in the endoplasmic reticulum membrane. It is found in the basolateral cell membrane. It catalyses the reaction 3,3',5-triiodo-L-thyronine + iodide + A + H(+) = L-thyroxine + AH2. It carries out the reaction 3,3',5'-triiodo-L-thyronine + iodide + A + H(+) = L-thyroxine + AH2. The enzyme catalyses 3,3'-diiodo-L-thyronine + iodide + A + H(+) = 3,3',5'-triiodo-L-thyronine + AH2. The catalysed reaction is 3,3'-diiodo-L-thyronine + iodide + A + H(+) = 3,3',5-triiodo-L-thyronine + AH2. It catalyses the reaction 3'-iodo-L-thyronine + iodide + A + H(+) = 3',5'-diiodo-L-thyronine + AH2. It carries out the reaction 3-iodo-L-thyronine + iodide + A + H(+) = 3,5-diiodo-L-thyronine + AH2. The enzyme catalyses 3-iodo-L-thyronine + iodide + A + H(+) = 3,3'-diiodo-L-thyronine + AH2. The catalysed reaction is 3,3'-diiodothyronamine + iodide + A + H(+) = 3,3',5'-triiodothyronamine + AH2. It catalyses the reaction 3'-iodothyronamine + iodide + A + H(+) = 3',5'-diiodothyronamine + AH2. It carries out the reaction 3-iodothyronamine + iodide + A + H(+) = 3,3'-diiodothyronamine + AH2. The enzyme catalyses 3,3'-diiodothyronamine + iodide + A + H(+) = 3,3',5-triiodothyronamine + AH2. The catalysed reaction is 3-iodothyronamine + iodide + A + H(+) = 3,5-diiodothyronamine + AH2. It catalyses the reaction 3,3'-diiodo-L-thyronine sulfate + iodide + A + H(+) = 3,3',5'-triiodo-L-thyronine sulfate + AH2. It carries out the reaction 3,3',5'-triiodo-L-thyronine sulfate + iodide + A + H(+) = L-thyroxine sulfate + AH2. The enzyme catalyses 3,3'-diiodo-L-thyronine sulfate + iodide + A + H(+) = 3,3',5-triiodo-L-thyronine sulfate + AH2. Its function is as follows. Plays a crucial role in the metabolism of thyroid hormones (TH) and has specific roles in TH activation and inactivation by deiodination. Catalyzes the deiodination of L-thyroxine (T4) to 3,5,3'-triiodothyronine (T3) and 3',5'-diiodothyronine (3',5'-T2) to 3'-monoiodothyronine (3'-T1) via outer-ring deiodination (ORD). Catalyzes the deiodination of T4 to 3,3',5'-triiodothyronine (rT3), T3 to 3,3'-diiodothyronine (3,3'-T2), 3,5-diiodothyronine (3,5-T2) to 3-monoiodothyronine (3-T1) and 3,3'-T2 to 3-T1 via inner-ring deiodination (IRD). Catalyzes the deiodination of rT3 to 3,3'-T2 via ORD. Catalyzes the phenolic ring deiodinations of 3,3',5'-triiodothyronamine, 3',5'-diiodothyronamine and 3,3'-diiodothyronamine as well as tyrosyl ring deiodinations of 3,5,3'-triiodothyronamine and 3,5-diiodothyronamine. Catalyzes the deiodination of L-thyroxine sulfate and 3,3',5-triiodo-L-thyronine sulfate via IRD and of 3,3',5'-triiodo-L-thyronine sulfate via ORD. In Suncus murinus (Asian house shrew), this protein is Type I iodothyronine deiodinase (DIO1).